Reading from the N-terminus, the 910-residue chain is Protein translocase subunit SecA 1 (910 aa).

ATP contacts are provided by residues Q86, 104–108 (GEGKT), and D512. Zn(2+) contacts are provided by C894, C896, C905, and H906.

Belongs to the SecA family. In terms of assembly, monomer and homodimer. Part of the essential Sec protein translocation apparatus which comprises SecA, SecYEG and auxiliary proteins SecDF-YajC and YidC. Zn(2+) serves as cofactor.

It is found in the cell inner membrane. It localises to the cytoplasm. The catalysed reaction is ATP + H2O + cellular proteinSide 1 = ADP + phosphate + cellular proteinSide 2.. Part of the Sec protein translocase complex. Interacts with the SecYEG preprotein conducting channel. Has a central role in coupling the hydrolysis of ATP to the transfer of proteins into and across the cell membrane, serving both as a receptor for the preprotein-SecB complex and as an ATP-driven molecular motor driving the stepwise translocation of polypeptide chains across the membrane. The chain is Protein translocase subunit SecA 1 from Bordetella avium (strain 197N).